We begin with the raw amino-acid sequence, 732 residues long: 1,4-alpha-glucan branching enzyme GlgB 2 (732 aa).

The active-site Nucleophile is Asp-413. Glu-466 acts as the Proton donor in catalysis.

It belongs to the glycosyl hydrolase 13 family. GlgB subfamily. As to quaternary structure, monomer.

It catalyses the reaction Transfers a segment of a (1-&gt;4)-alpha-D-glucan chain to a primary hydroxy group in a similar glucan chain.. Its pathway is glycan biosynthesis; glycogen biosynthesis. Functionally, catalyzes the formation of the alpha-1,6-glucosidic linkages in glycogen by scission of a 1,4-alpha-linked oligosaccharide from growing alpha-1,4-glucan chains and the subsequent attachment of the oligosaccharide to the alpha-1,6 position. The polypeptide is 1,4-alpha-glucan branching enzyme GlgB 2 (Rhizobium etli (strain ATCC 51251 / DSM 11541 / JCM 21823 / NBRC 15573 / CFN 42)).